The chain runs to 370 residues: Cytochrome b (370 aa).

Helical transmembrane passes span 25–45 (FGSM…FLAI), 69–90 (WIMQ…YTHI), 105–125 (WLSG…GYVL), and 170–190 (FFAL…IHIV). Residues His-75 and His-89 each coordinate heme b. His-174 and His-188 together coordinate heme b. His-193 provides a ligand contact to a ubiquinone. Helical transmembrane passes span 218–238 (YKDM…MSFM), 280–300 (LGGT…PFTH), 312–332 (LTQI…WTAT), and 339–358 (FITI…IINP).

This sequence belongs to the cytochrome b family. In terms of assembly, the cytochrome bc1 complex contains 3 respiratory subunits (MT-CYB, CYC1 and UQCRFS1), 2 core proteins (UQCRC1 and UQCRC2) and probably 6 low-molecular weight proteins. It depends on heme b as a cofactor.

The protein resides in the mitochondrion inner membrane. Its function is as follows. Component of the ubiquinol-cytochrome c reductase complex (complex III or cytochrome b-c1 complex) that is part of the mitochondrial respiratory chain. The b-c1 complex mediates electron transfer from ubiquinol to cytochrome c. Contributes to the generation of a proton gradient across the mitochondrial membrane that is then used for ATP synthesis. This is Cytochrome b (MT-CYB) from Micropechis ikaheca (New Guinean small-eyed snake).